Consider the following 518-residue polypeptide: Bifunctional purine biosynthesis protein PurH (518 aa).

The MGS-like domain occupies 1-146; sequence MSPIALLSVS…KNHQDVLVVT (146 aa).

It belongs to the PurH family.

The catalysed reaction is (6R)-10-formyltetrahydrofolate + 5-amino-1-(5-phospho-beta-D-ribosyl)imidazole-4-carboxamide = 5-formamido-1-(5-phospho-D-ribosyl)imidazole-4-carboxamide + (6S)-5,6,7,8-tetrahydrofolate. It catalyses the reaction IMP + H2O = 5-formamido-1-(5-phospho-D-ribosyl)imidazole-4-carboxamide. It participates in purine metabolism; IMP biosynthesis via de novo pathway; 5-formamido-1-(5-phospho-D-ribosyl)imidazole-4-carboxamide from 5-amino-1-(5-phospho-D-ribosyl)imidazole-4-carboxamide (10-formyl THF route): step 1/1. The protein operates within purine metabolism; IMP biosynthesis via de novo pathway; IMP from 5-formamido-1-(5-phospho-D-ribosyl)imidazole-4-carboxamide: step 1/1. This is Bifunctional purine biosynthesis protein PurH from Prochlorococcus marinus (strain NATL1A).